The sequence spans 204 residues: NADH-quinone oxidoreductase subunit C (204 aa).

Belongs to the complex I 30 kDa subunit family. As to quaternary structure, NDH-1 is composed of 14 different subunits. Subunits NuoB, C, D, E, F, and G constitute the peripheral sector of the complex.

It localises to the cell inner membrane. The enzyme catalyses a quinone + NADH + 5 H(+)(in) = a quinol + NAD(+) + 4 H(+)(out). NDH-1 shuttles electrons from NADH, via FMN and iron-sulfur (Fe-S) centers, to quinones in the respiratory chain. The immediate electron acceptor for the enzyme in this species is believed to be ubiquinone. Couples the redox reaction to proton translocation (for every two electrons transferred, four hydrogen ions are translocated across the cytoplasmic membrane), and thus conserves the redox energy in a proton gradient. The protein is NADH-quinone oxidoreductase subunit C of Vesicomyosocius okutanii subsp. Calyptogena okutanii (strain HA).